The sequence spans 312 residues: Large ribosomal subunit protein uL10 (312 aa).

Lysine 14 is covalently cross-linked (Glycyl lysine isopeptide (Lys-Gly) (interchain with G-Cter in ubiquitin)). Serine 68 is modified (phosphoserine). Glycyl lysine isopeptide (Lys-Gly) (interchain with G-Cter in ubiquitin) cross-links involve residues lysine 97 and lysine 144. Residues 199 to 230 are interaction with P1A-P2B; the sequence is SSILDITDEELVSHFVSAVSTIASISLAIGYP. The tract at residues 231–258 is interaction with P1B-P2A; sequence TLPSVGHTLINNYKDLLAVAIAASYHYP. The span at 278-293 shows a compositional bias: low complexity; sequence PAATSAASGDAAPAEE. The interval 278–312 is disordered; that stretch reads PAATSAASGDAAPAEEAAAEEEEESDDDMGFGLFD. Residues 294–306 show a composition bias toward acidic residues; that stretch reads AAAEEEEESDDDM. Serine 302 is subject to Phosphoserine; by CK2.

The protein belongs to the universal ribosomal protein uL10 family. Component of the large ribosomal subunit (LSU). Mature yeast ribosomes consist of a small (40S) and a large (60S) subunit. The 40S small subunit contains 1 molecule of ribosomal RNA (18S rRNA) and 33 different proteins (encoded by 57 genes). The large 60S subunit contains 3 rRNA molecules (25S, 5.8S and 5S rRNA) and 46 different proteins (encoded by 81 genes). The 5 acidic ribosomal P-proteins form the stalk structure of the 60S subunit. They are organized as a pentameric complex in which uL10/P0 interacts with 2 heterodimers, P1A-P2B and P1B-P2A. uL10 directly interacts with 28S rRNA. uL10 interacts with YFL034W.

It localises to the cytoplasm. Component of the ribosome, a large ribonucleoprotein complex responsible for the synthesis of proteins in the cell. The small ribosomal subunit (SSU) binds messenger RNAs (mRNAs) and translates the encoded message by selecting cognate aminoacyl-transfer RNA (tRNA) molecules. The large subunit (LSU) contains the ribosomal catalytic site termed the peptidyl transferase center (PTC), which catalyzes the formation of peptide bonds, thereby polymerizing the amino acids delivered by tRNAs into a polypeptide chain. The nascent polypeptides leave the ribosome through a tunnel in the LSU and interact with protein factors that function in enzymatic processing, targeting, and the membrane insertion of nascent chains at the exit of the ribosomal tunnel. uL10 forms part of the P stalk that participates in recruiting G proteins to the ribosome. The chain is Large ribosomal subunit protein uL10 from Saccharomyces cerevisiae (strain ATCC 204508 / S288c) (Baker's yeast).